We begin with the raw amino-acid sequence, 694 residues long: Elongation factor G (694 aa).

The region spanning 6 to 288 is the tr-type G domain; sequence KLYRNIGIAA…GVIEYLPSPT (283 aa). GTP is bound by residues 15–22, 86–90, and 140–143; these read AHVDAGKT, DTPGH, and NKMD.

It belongs to the TRAFAC class translation factor GTPase superfamily. Classic translation factor GTPase family. EF-G/EF-2 subfamily.

Its subcellular location is the cytoplasm. Its function is as follows. Catalyzes the GTP-dependent ribosomal translocation step during translation elongation. During this step, the ribosome changes from the pre-translocational (PRE) to the post-translocational (POST) state as the newly formed A-site-bound peptidyl-tRNA and P-site-bound deacylated tRNA move to the P and E sites, respectively. Catalyzes the coordinated movement of the two tRNA molecules, the mRNA and conformational changes in the ribosome. This is Elongation factor G from Legionella pneumophila (strain Lens).